We begin with the raw amino-acid sequence, 414 residues long: DNA polymerase IV 1 (414 aa).

The UmuC domain maps to Ile-8 to Gly-189. Positions 12 and 108 each coordinate Mg(2+). Glu-109 is an active-site residue. The disordered stretch occupies residues Leu-391–Ser-414.

It belongs to the DNA polymerase type-Y family. Monomer. It depends on Mg(2+) as a cofactor.

It localises to the cytoplasm. It catalyses the reaction DNA(n) + a 2'-deoxyribonucleoside 5'-triphosphate = DNA(n+1) + diphosphate. Its function is as follows. Poorly processive, error-prone DNA polymerase involved in untargeted mutagenesis. Copies undamaged DNA at stalled replication forks, which arise in vivo from mismatched or misaligned primer ends. These misaligned primers can be extended by PolIV. Exhibits no 3'-5' exonuclease (proofreading) activity. May be involved in translesion synthesis (TSL), in conjunction with the beta clamp from PolIII. The polypeptide is DNA polymerase IV 1 (dinB1) (Bacillus subtilis (strain 168)).